The chain runs to 377 residues: Succinyl-diaminopimelate desuccinylase (377 aa).

Residue H66 participates in Zn(2+) binding. The active site involves D68. D99 provides a ligand contact to Zn(2+). E133 functions as the Proton acceptor in the catalytic mechanism. Zn(2+)-binding residues include E134, E163, and H349.

Belongs to the peptidase M20A family. DapE subfamily. Homodimer. The cofactor is Zn(2+). Co(2+) is required as a cofactor.

The catalysed reaction is N-succinyl-(2S,6S)-2,6-diaminopimelate + H2O = (2S,6S)-2,6-diaminopimelate + succinate. It participates in amino-acid biosynthesis; L-lysine biosynthesis via DAP pathway; LL-2,6-diaminopimelate from (S)-tetrahydrodipicolinate (succinylase route): step 3/3. Functionally, catalyzes the hydrolysis of N-succinyl-L,L-diaminopimelic acid (SDAP), forming succinate and LL-2,6-diaminopimelate (DAP), an intermediate involved in the bacterial biosynthesis of lysine and meso-diaminopimelic acid, an essential component of bacterial cell walls. This is Succinyl-diaminopimelate desuccinylase from Legionella pneumophila (strain Corby).